The chain runs to 67 residues: Conotoxin AbVIO (67 aa).

The N-terminal stretch at 1 to 17 (VIIIAVLFLTACQLIAT) is a signal peptide. Positions 18–40 (ASYARSERKHPDLRLSSRNSKLS) are excised as a propeptide. 3 cysteine pairs are disulfide-bonded: Cys-43-Cys-57, Cys-50-Cys-61, and Cys-56-Cys-66.

Belongs to the conotoxin O1 superfamily. In terms of tissue distribution, expressed by the venom duct.

Its subcellular location is the secreted. The protein is Conotoxin AbVIO of Conus abbreviatus (Abbreviated cone).